Consider the following 488-residue polypeptide: Cytochrome P450 family 716 subfamily AD polypeptide 2 (488 aa).

The chain crosses the membrane as a helical span at residues 5–25; sequence LLLLSTLLILTLCCHFFYLFI. Cysteine 433 contributes to the heme binding site.

This sequence belongs to the cytochrome P450 family. It depends on heme as a cofactor. As to expression, expressed in maturing fruits and in juice vesicles.

The protein localises to the membrane. It catalyses the reaction (1R,2R,3S,8R,10R,11R,15S,16S)-3-(acetyloxy)-15-[(4R)-4-[(2S)-3,3-dimethyloxiran-2-yl]-1,4-dihydroxybutan-2-yl]-2,7,7,11,16-pentamethyl-5-oxo-6-oxatetracyclo[9.7.0.0(2,8).0(12,16)]octadec-12-en-10-yl acetate + reduced [NADPH--hemoprotein reductase] + O2 = (1R,2R,3S,8R,10R,11R,15S,16S)-3-(acetyloxy)-15-(1-hydroxy-4-oxobutan-2-yl)-2,7,7,11,16-pentamethyl-5-oxo-6-oxatetracyclo[9.7.0.0(2,8).0(12,16)]octadec-12-en-10-yl acetate + 2-methylpropanoate + oxidized [NADPH--hemoprotein reductase] + H2O + 2 H(+). It functions in the pathway secondary metabolite biosynthesis; terpenoid biosynthesis. Its function is as follows. Monooxygenase involved in the biosynthesis of limonoids triterpene natural products such as limonin, a compound with insecticidal activity responsible for the bitter taste in citrus. Catalyzes the formation of (1R,2R,3S,8R,10R,11R,15S,16S)-3-(acetyloxy)-15-(1-hydroxy-4-oxobutan-2-yl)-2,7,7,11,16-pentamethyl-5-oxo-6-oxatetracyclo[9.7.0.0(2,8).0(12,16)]octadec-12-en-10-yl acetate. This is Cytochrome P450 family 716 subfamily AD polypeptide 2 from Citrus sinensis (Sweet orange).